Consider the following 366-residue polypeptide: Protein FAM110B (366 aa).

3 disordered regions span residues 127–152 (SSEGSSSGSGHKHSSRNWPPHRDTTD), 163–182 (KVYPTPGHGSPQESSSHVSR), and 216–252 (CSSSAPPLPPKPKVAAMKSPEADQVEPACGVSRRPSL). Phosphoserine occurs at positions 234 and 297. The tract at residues 313–333 (DCEQSQDSNSDLRNDDSANDR) is disordered. Positions 322-331 (SDLRNDDSAN) are enriched in basic and acidic residues.

The protein belongs to the FAM110 family.

The protein resides in the cytoplasm. Its subcellular location is the cytoskeleton. It localises to the microtubule organizing center. The protein localises to the centrosome. The chain is Protein FAM110B (Fam110b) from Mus musculus (Mouse).